We begin with the raw amino-acid sequence, 437 residues long: Ribosomal protein uS12 methylthiotransferase RimO (437 aa).

An MTTase N-terminal domain is found at 9 to 124 (TKVNIVTLGC…LPAILKKFRA (116 aa)). [4Fe-4S] cluster is bound by residues Cys18, Cys56, Cys90, Cys151, Cys155, and Cys158. Positions 137 to 367 (TTPSHYAYVK…MSIQEGISAE (231 aa)) constitute a Radical SAM core domain. One can recognise a TRAM domain in the interval 370 to 437 (EKKIGNTYKV…EFDLFGEIVK (68 aa)).

This sequence belongs to the methylthiotransferase family. RimO subfamily. It depends on [4Fe-4S] cluster as a cofactor.

The protein resides in the cytoplasm. The enzyme catalyses L-aspartate(89)-[ribosomal protein uS12]-hydrogen + (sulfur carrier)-SH + AH2 + 2 S-adenosyl-L-methionine = 3-methylsulfanyl-L-aspartate(89)-[ribosomal protein uS12]-hydrogen + (sulfur carrier)-H + 5'-deoxyadenosine + L-methionine + A + S-adenosyl-L-homocysteine + 2 H(+). Catalyzes the methylthiolation of an aspartic acid residue of ribosomal protein uS12. The sequence is that of Ribosomal protein uS12 methylthiotransferase RimO from Cytophaga hutchinsonii (strain ATCC 33406 / DSM 1761 / CIP 103989 / NBRC 15051 / NCIMB 9469 / D465).